A 526-amino-acid polypeptide reads, in one-letter code: Acid-sensing ion channel 1 (526 aa).

Over 1–49 the chain is Cytoplasmic; the sequence is MELKTEEEEVGGVQPVSIQAFASSSTLHGLAHIFSYERLSLKRALWALC. A helical membrane pass occupies residues 50–66; the sequence is FLGSLAVLLCVCTERVQ. Residues 67–425 are Extracellular-facing; it reads YYFCYHHVTK…ETIEQKKAYE (359 aa). 7 disulfide bridges follow: cysteine 93/cysteine 194, cysteine 172/cysteine 179, cysteine 290/cysteine 365, cysteine 308/cysteine 361, cysteine 312/cysteine 359, cysteine 321/cysteine 343, and cysteine 323/cysteine 335. Residues asparagine 366 and asparagine 393 are each glycosylated (N-linked (GlcNAc...) asparagine). A discontinuously helical transmembrane segment spans residues 426–456; it reads IAGLLGDIGGQMGLFIGASILTVLELFDYAY. The short motif at 442–444 is the GAS motif; ion selectivity filter element; that stretch reads GAS. Over 457 to 526 the chain is Cytoplasmic; that stretch reads EVIKHRLCRR…ARGTFEDFTC (70 aa). The residue at position 477 (serine 477) is a Phosphoserine; by PKA. Serine 497 is modified (phosphoserine).

It belongs to the amiloride-sensitive sodium channel (TC 1.A.6) family. ASIC1 subfamily. Homotrimer. Heterotrimer; with other ASIC proteins producing channel with different properties. Interacts with PICK1; regulates ASIC1 clustering in membranes. Interacts with STOM; alters heterotrimeric ASIC channels activity. PH-gating could be regulated by serine proteases. In terms of processing, phosphorylation by PKA regulates interaction with PICK1 and subcellular localization. Phosphorylation by PKC may regulate the channel. As to expression, expressed in brain areas receiving strong excitatory corticofugal input. In hippocampus, expressed in the hilus of the dentate gyrus. In the cerebral cortex expressed in anterior and posterior cingulate cortex, sensory and motor cortices. In the sensory cortex strongest expression is detected in the whisker barrel field. In sensorimotor and cingulate cortex expression is elevated in layer III. Also expressed in basal ganglia, striatum, ventral pallidum, olfactory tubercle, and nucleus accumbens. Weakly expressed in thalamus with the exception of the habenula and the medial septal nuclei. In olfactory bulb, preferentially expressed in the glomerular layer, within glomeruli. Expressed in cerebellum in the molecular and granule cell layers. Strongly expressed in amygdala complex, particularly in the lateral and basolateral nuclei. Isoform 1 is more abundant in brain compared to isoform 2 (at protein level). Expressed in the nodose ganglion and dorsal root ganglion. Expressed in dendritic spine cells.

It localises to the cell membrane. The protein resides in the postsynaptic cell membrane. The protein localises to the cell projection. It is found in the dendrite. It carries out the reaction Na(+)(in) = Na(+)(out). The enzyme catalyses Ca(2+)(in) = Ca(2+)(out). It catalyses the reaction K(+)(in) = K(+)(out). The catalysed reaction is Li(+)(in) = Li(+)(out). Its activity is regulated as follows. Inhibited by the diuretic drug amiloride. With respect to regulation, the activity of the channel is sensitive to rapid decrease in osmotic pressure. Its function is as follows. Forms voltage-independent, pH-gated trimeric sodium channels that act as postsynaptic excitatory receptors in the nervous system, playing a crucial role in regulating synaptic plasticity, learning, and memory. Upon extracellular pH drop this channel elicits transient, fast activating, and completely desensitizing inward currents. Displays high selectivity for sodium ions but can also permit the permeation of other cations. Regulates more or less directly intracellular calcium concentration and CaMKII phosphorylation, and thereby the density of dendritic spines. Modulates neuronal activity in the circuits underlying innate fear. Functionally, has high selectivity for sodium ions but is also potentially permeable to other cations including potassium. Could function in cochlear mechanoelectrical transduction. The protein is Acid-sensing ion channel 1 of Mus musculus (Mouse).